We begin with the raw amino-acid sequence, 118 residues long: Protein Rev (118 aa).

2 positions are modified to phosphoserine; by host CK2: Ser5 and Ser8. Residues 18–26 form a homomultimerization region; that stretch reads LIKFLYQSN. The interval 23–46 is disordered; that stretch reads YQSNPPPSPEGTRQARRNRRRRWR. A Nuclear localization signal and RNA-binding (RRE) motif is present at residues 34–50; that stretch reads TRQARRNRRRRWRARQR. Positions 36–46 are enriched in basic residues; the sequence is QARRNRRRRWR. The short motif at 73–84 is the Nuclear export signal and binding to XPO1 element; that stretch reads LQLPPLERLNLN. Residues 87 to 118 form a disordered region; the sequence is EDCRTSGTQGVGHPQISVESPTVLESGTEEQC. Ser92 carries the phosphoserine; by host modification. Polar residues predominate over residues 103-112; sequence SVESPTVLES.

It belongs to the HIV-1 REV protein family. In terms of assembly, homomultimer; when bound to the RRE. Multimeric assembly is essential for activity and may involve XPO1. Binds to human KPNB1, XPO1, TNPO1, RANBP5 and IPO7. Interacts with the viral Integrase. Interacts with human KHDRBS1. Interacts with human NAP1; this interaction decreases Rev multimerization and stimulates its activity. Interacts with human DEAD-box helicases DDX3 and DDX24; these interactions may serve for viral RNA export to the cytoplasm and packaging, respectively. Interacts with human PSIP1; this interaction may inhibit HIV-1 DNA integration by promoting dissociation of the Integrase-LEDGF/p75 complex. Post-translationally, asymmetrically arginine dimethylated at one site by host PRMT6. Methylation impairs the RNA-binding activity and export of viral RNA from the nucleus to the cytoplasm. In terms of processing, phosphorylated by protein kinase CK2. Presence of, and maybe binding to the N-terminus of the regulatory beta subunit of CK2 is necessary for CK2-mediated Rev's phosphorylation.

Its subcellular location is the host nucleus. It localises to the host nucleolus. The protein localises to the host cytoplasm. Escorts unspliced or incompletely spliced viral pre-mRNAs (late transcripts) out of the nucleus of infected cells. These pre-mRNAs carry a recognition sequence called Rev responsive element (RRE) located in the env gene, that is not present in fully spliced viral mRNAs (early transcripts). This function is essential since most viral proteins are translated from unspliced or partially spliced pre-mRNAs which cannot exit the nucleus by the pathway used by fully processed cellular mRNAs. Rev itself is translated from a fully spliced mRNA that readily exits the nucleus. Rev's nuclear localization signal (NLS) binds directly to KPNB1/Importin beta-1 without previous binding to KPNA1/Importin alpha-1. KPNB1 binds to the GDP bound form of RAN (Ran-GDP) and targets Rev to the nucleus. In the nucleus, the conversion from Ran-GDP to Ran-GTP dissociates Rev from KPNB1 and allows Rev's binding to the RRE in viral pre-mRNAs. Rev multimerization on the RRE via cooperative assembly exposes its nuclear export signal (NES) to the surface. Rev can then form a complex with XPO1/CRM1 and Ran-GTP, leading to nuclear export of the complex. Conversion from Ran-GTP to Ran-GDP mediates dissociation of the Rev/RRE/XPO1/RAN complex, so that Rev can return to the nucleus for a subsequent round of export. Beside KPNB1, also seems to interact with TNPO1/Transportin-1, RANBP5/IPO5 and IPO7/RANBP7 for nuclear import. The nucleoporin-like HRB/RIP is an essential cofactor that probably indirectly interacts with Rev to release HIV RNAs from the perinuclear region to the cytoplasm. The protein is Protein Rev of Human immunodeficiency virus type 1 group M subtype D (isolate ELI) (HIV-1).